Consider the following 151-residue polypeptide: Ribosomal RNA large subunit methyltransferase H (151 aa).

Residues leucine 73, glycine 100, and leucine 119–leucine 124 contribute to the S-adenosyl-L-methionine site.

Belongs to the RNA methyltransferase RlmH family. Homodimer.

Its subcellular location is the cytoplasm. The catalysed reaction is pseudouridine(1915) in 23S rRNA + S-adenosyl-L-methionine = N(3)-methylpseudouridine(1915) in 23S rRNA + S-adenosyl-L-homocysteine + H(+). Specifically methylates the pseudouridine at position 1915 (m3Psi1915) in 23S rRNA. The sequence is that of Ribosomal RNA large subunit methyltransferase H from Campylobacter hominis (strain ATCC BAA-381 / DSM 21671 / CCUG 45161 / LMG 19568 / NCTC 13146 / CH001A).